We begin with the raw amino-acid sequence, 220 residues long: uncharacterized protein (220 aa).

The next 4 helical transmembrane spans lie at 61 to 81 (LISV…SFFG), 85 to 105 (SVMF…YGAF), 115 to 135 (FVII…ILLL), and 150 to 170 (LPLE…SLLL).

Its subcellular location is the membrane. This is an uncharacterized protein from Caenorhabditis elegans.